The primary structure comprises 404 residues: Probable tRNA sulfurtransferase (404 aa).

The THUMP domain maps to 60–165 (TAVAESLKQV…EEAAYLSYET (106 aa)). Residues 183 to 184 (ML), 208 to 209 (HF), R265, G287, and Q296 contribute to the ATP site.

The protein belongs to the ThiI family.

Its subcellular location is the cytoplasm. It catalyses the reaction [ThiI sulfur-carrier protein]-S-sulfanyl-L-cysteine + a uridine in tRNA + 2 reduced [2Fe-2S]-[ferredoxin] + ATP + H(+) = [ThiI sulfur-carrier protein]-L-cysteine + a 4-thiouridine in tRNA + 2 oxidized [2Fe-2S]-[ferredoxin] + AMP + diphosphate. The enzyme catalyses [ThiS sulfur-carrier protein]-C-terminal Gly-Gly-AMP + S-sulfanyl-L-cysteinyl-[cysteine desulfurase] + AH2 = [ThiS sulfur-carrier protein]-C-terminal-Gly-aminoethanethioate + L-cysteinyl-[cysteine desulfurase] + A + AMP + 2 H(+). It functions in the pathway cofactor biosynthesis; thiamine diphosphate biosynthesis. Its function is as follows. Catalyzes the ATP-dependent transfer of a sulfur to tRNA to produce 4-thiouridine in position 8 of tRNAs, which functions as a near-UV photosensor. Also catalyzes the transfer of sulfur to the sulfur carrier protein ThiS, forming ThiS-thiocarboxylate. This is a step in the synthesis of thiazole, in the thiamine biosynthesis pathway. The sulfur is donated as persulfide by IscS. This is Probable tRNA sulfurtransferase from Streptococcus pneumoniae serotype 19F (strain G54).